The primary structure comprises 357 residues: UDP-N-acetylglucosamine--N-acetylmuramyl-(pentapeptide) pyrophosphoryl-undecaprenol N-acetylglucosamine transferase (357 aa).

Residues 12–14 (TGG), asparagine 124, arginine 163, serine 191, isoleucine 245, 264–269 (ALTVSE), and glutamine 290 each bind UDP-N-acetyl-alpha-D-glucosamine.

Belongs to the glycosyltransferase 28 family. MurG subfamily.

The protein localises to the cell inner membrane. It carries out the reaction di-trans,octa-cis-undecaprenyl diphospho-N-acetyl-alpha-D-muramoyl-L-alanyl-D-glutamyl-meso-2,6-diaminopimeloyl-D-alanyl-D-alanine + UDP-N-acetyl-alpha-D-glucosamine = di-trans,octa-cis-undecaprenyl diphospho-[N-acetyl-alpha-D-glucosaminyl-(1-&gt;4)]-N-acetyl-alpha-D-muramoyl-L-alanyl-D-glutamyl-meso-2,6-diaminopimeloyl-D-alanyl-D-alanine + UDP + H(+). Its pathway is cell wall biogenesis; peptidoglycan biosynthesis. Functionally, cell wall formation. Catalyzes the transfer of a GlcNAc subunit on undecaprenyl-pyrophosphoryl-MurNAc-pentapeptide (lipid intermediate I) to form undecaprenyl-pyrophosphoryl-MurNAc-(pentapeptide)GlcNAc (lipid intermediate II). This chain is UDP-N-acetylglucosamine--N-acetylmuramyl-(pentapeptide) pyrophosphoryl-undecaprenol N-acetylglucosamine transferase, found in Nitrosospira multiformis (strain ATCC 25196 / NCIMB 11849 / C 71).